A 135-amino-acid chain; its full sequence is UPF0299 membrane protein PC1_1498 (135 aa).

Transmembrane regions (helical) follow at residues 5 to 25 (FIVCWQYLRAFALIYLCLLAG), 30 to 50 (ALLPFTIPGSIIGMLVLFTLL), 63 to 83 (GCHLLIRHMALLFVPIGVGVM), and 93 to 113 (FGPIVVSCLISTFIVMLVVGF).

It belongs to the UPF0299 family.

It is found in the cell inner membrane. The protein is UPF0299 membrane protein PC1_1498 of Pectobacterium carotovorum subsp. carotovorum (strain PC1).